The primary structure comprises 462 residues: Juvenile hormone epoxide hydrolase (462 aa).

A helical membrane pass occupies residues 4–24 (ILSSFVAGVAIGSGLVITYVL). The active-site Nucleophile is the D227. Residue Y372 is the Proton donor of the active site. Residue H428 is the Proton acceptor of the active site.

The protein belongs to the peptidase S33 family.

It is found in the microsome membrane. Its subcellular location is the endoplasmic reticulum membrane. The enzyme catalyses cis-stilbene oxide + H2O = (1R,2R)-hydrobenzoin. The catalysed reaction is 1-(4-methoxyphenyl)-N-methyl-N-[(3-methyloxetan-3-yl)methyl]methanamine + H2O = 2-{[(4-methoxybenzyl)(methyl)amino]methyl}-2-methylpropane-1,3-diol. Functionally, catalyzes juvenile hormone hydrolysis. This chain is Juvenile hormone epoxide hydrolase, found in Manduca sexta (Tobacco hawkmoth).